We begin with the raw amino-acid sequence, 827 residues long: Glycerol-3-phosphate acyltransferase (827 aa).

The short motif at 325-330 (CHRSHM) is the HXXXXD motif element.

Belongs to the GPAT/DAPAT family.

The protein localises to the cell inner membrane. The enzyme catalyses sn-glycerol 3-phosphate + an acyl-CoA = a 1-acyl-sn-glycero-3-phosphate + CoA. The protein operates within phospholipid metabolism; CDP-diacylglycerol biosynthesis; CDP-diacylglycerol from sn-glycerol 3-phosphate: step 1/3. In Shigella dysenteriae serotype 1 (strain Sd197), this protein is Glycerol-3-phosphate acyltransferase.